Here is a 906-residue protein sequence, read N- to C-terminus: Probable RNA-directed DNA polymerase from transposon BS (906 aa).

The region spanning 482-758 is the Reverse transcriptase domain; that stretch reads AILRVQFFPK…SQAKYLGITL (277 aa).

Mg(2+) is required as a cofactor. Mn(2+) serves as cofactor.

It carries out the reaction DNA(n) + a 2'-deoxyribonucleoside 5'-triphosphate = DNA(n+1) + diphosphate. This chain is Probable RNA-directed DNA polymerase from transposon BS, found in Drosophila melanogaster (Fruit fly).